The following is a 154-amino-acid chain: NADPH-dependent 7-cyano-7-deazaguanine reductase (154 aa).

Cys-52 acts as the Thioimide intermediate in catalysis. The active-site Proton donor is the Asp-59. Residues 74 to 76 (VES) and 93 to 94 (HE) contribute to the substrate site.

It belongs to the GTP cyclohydrolase I family. QueF type 1 subfamily.

Its subcellular location is the cytoplasm. The catalysed reaction is 7-aminomethyl-7-carbaguanine + 2 NADP(+) = 7-cyano-7-deazaguanine + 2 NADPH + 3 H(+). Its pathway is tRNA modification; tRNA-queuosine biosynthesis. Functionally, catalyzes the NADPH-dependent reduction of 7-cyano-7-deazaguanine (preQ0) to 7-aminomethyl-7-deazaguanine (preQ1). The polypeptide is NADPH-dependent 7-cyano-7-deazaguanine reductase (Paracoccus denitrificans (strain Pd 1222)).